The primary structure comprises 227 residues: Mitochondrial inner membrane protease ATP23 (227 aa).

His124 is an a divalent metal cation binding site. Residue Glu125 is part of the active site. His128 contributes to the a divalent metal cation binding site.

This sequence belongs to the peptidase M76 family. Interacts with ATP6.

It is found in the mitochondrion inner membrane. Has a dual role in the assembly of mitochondrial ATPase. Acts as a protease that removes the N-terminal 10 residues of mitochondrial ATPase CF(0) subunit 6 (ATP6) at the intermembrane space side. Also involved in the correct assembly of the membrane-embedded ATPase CF(0) particle, probably mediating association of ATP6 with the subunit 9 ring. This Saccharomyces cerevisiae (strain YJM789) (Baker's yeast) protein is Mitochondrial inner membrane protease ATP23 (ATP23).